A 461-amino-acid chain; its full sequence is Ribulose bisphosphate carboxylase (461 aa).

Residue asparagine 112 coordinates substrate. Lysine 167 functions as the Proton acceptor in the catalytic mechanism. Lysine 169 lines the substrate pocket. Positions 192, 194, and 195 each coordinate Mg(2+). At lysine 192 the chain carries N6-carboxylysine. Residue histidine 288 is the Proton acceptor of the active site. 3 residues coordinate substrate: arginine 289, histidine 322, and serine 369.

The protein belongs to the RuBisCO large chain family. Type II subfamily. As to quaternary structure, homodimer. Mg(2+) serves as cofactor.

The enzyme catalyses 2 (2R)-3-phosphoglycerate + 2 H(+) = D-ribulose 1,5-bisphosphate + CO2 + H2O. It carries out the reaction D-ribulose 1,5-bisphosphate + O2 = 2-phosphoglycolate + (2R)-3-phosphoglycerate + 2 H(+). In terms of biological role, ruBisCO catalyzes two reactions: the carboxylation of D-ribulose 1,5-bisphosphate, the primary event in carbon dioxide fixation, as well as the oxidative fragmentation of the pentose substrate. Both reactions occur simultaneously and in competition at the same active site. The protein is Ribulose bisphosphate carboxylase of Rhodopseudomonas palustris (strain BisB5).